The primary structure comprises 396 residues: Argininosuccinate synthase (396 aa).

6–14 (AYSGGLDTS) serves as a coordination point for ATP. Tyr83 contributes to the L-citrulline binding site. Residue Gly113 coordinates ATP. Positions 115, 119, and 120 each coordinate L-aspartate. Residue Asn119 participates in L-citrulline binding. 5 residues coordinate L-citrulline: Arg123, Ser171, Ser180, Glu256, and Tyr268.

It belongs to the argininosuccinate synthase family. Type 1 subfamily. As to quaternary structure, homotetramer.

Its subcellular location is the cytoplasm. It carries out the reaction L-citrulline + L-aspartate + ATP = 2-(N(omega)-L-arginino)succinate + AMP + diphosphate + H(+). It participates in amino-acid biosynthesis; L-arginine biosynthesis; L-arginine from L-ornithine and carbamoyl phosphate: step 2/3. This chain is Argininosuccinate synthase, found in Hyperthermus butylicus (strain DSM 5456 / JCM 9403 / PLM1-5).